The chain runs to 252 residues: Phosphoglycolate phosphatase (252 aa).

The active-site Nucleophile is the D13. Mg(2+) is bound by residues D13, D15, and D192.

The protein belongs to the HAD-like hydrolase superfamily. CbbY/CbbZ/Gph/YieH family. As to quaternary structure, monomer. Requires Mg(2+) as cofactor. Chloride is required as a cofactor.

It catalyses the reaction 2-phosphoglycolate + H2O = glycolate + phosphate. The protein operates within organic acid metabolism; glycolate biosynthesis; glycolate from 2-phosphoglycolate: step 1/1. Its function is as follows. Specifically catalyzes the dephosphorylation of 2-phosphoglycolate. Is involved in the dissimilation of the intracellular 2-phosphoglycolate formed during the DNA repair of 3'-phosphoglycolate ends, a major class of DNA lesions induced by oxidative stress. This chain is Phosphoglycolate phosphatase, found in Salmonella typhi.